The primary structure comprises 187 residues: Accessory gene regulator protein B (187 aa).

A run of 5 helical transmembrane segments spans residues 49–69 (ISIFLSVFLFTLVTHLSYMLI), 82–102 (ILCYIQSILTFVFVPYFLINI), 106–126 (FTYLLALSIIGLISVVIYAPA), 144–164 (LSIIMYLLVLILSLIIHPFYA), and 166–186 (FMLLGILVESITLLPIFFPKE).

It belongs to the AgrB family.

The protein resides in the cell membrane. Its function is as follows. Essential for the production of a quorum sensing system signal molecule, the autoinducing peptide (AIP). This quorum sensing system is responsible for the regulation of the expression of virulence factor genes. Involved in the proteolytic processing of AgrD, the precursor of AIP. This Staphylococcus aureus (strain Mu50 / ATCC 700699) protein is Accessory gene regulator protein B.